A 72-amino-acid chain; its full sequence is Translation initiation factor IF-1 (72 aa).

In terms of domain architecture, S1-like spans Met-1–Lys-72.

This sequence belongs to the IF-1 family. As to quaternary structure, component of the 30S ribosomal translation pre-initiation complex which assembles on the 30S ribosome in the order IF-2 and IF-3, IF-1 and N-formylmethionyl-tRNA(fMet); mRNA recruitment can occur at any time during PIC assembly.

The protein localises to the cytoplasm. One of the essential components for the initiation of protein synthesis. Stabilizes the binding of IF-2 and IF-3 on the 30S subunit to which N-formylmethionyl-tRNA(fMet) subsequently binds. Helps modulate mRNA selection, yielding the 30S pre-initiation complex (PIC). Upon addition of the 50S ribosomal subunit IF-1, IF-2 and IF-3 are released leaving the mature 70S translation initiation complex. This Chlorobaculum tepidum (strain ATCC 49652 / DSM 12025 / NBRC 103806 / TLS) (Chlorobium tepidum) protein is Translation initiation factor IF-1.